Consider the following 452-residue polypeptide: FAD-linked oxidoreductase DDB_G0289697 (452 aa).

The 169-residue stretch at Val44 to Val212 folds into the FAD-binding PCMH-type domain. His81 carries the post-translational modification Pros-8alpha-FAD histidine.

The protein belongs to the oxygen-dependent FAD-linked oxidoreductase family. It depends on FAD as a cofactor.

The chain is FAD-linked oxidoreductase DDB_G0289697 from Dictyostelium discoideum (Social amoeba).